A 220-amino-acid polypeptide reads, in one-letter code: 26S proteasome non-ATPase regulatory subunit 9 (220 aa).

2 coiled-coil regions span residues 4–32 and 61–91; these read GTTT…GQIL and RLAR…YHSE. The PDZ domain occupies 102-200; the sequence is RASALDLDSD…QLDLILVPKT (99 aa).

It belongs to the proteasome subunit p27 family. Interacts with PI31; this interaction is increased by PI31 ADP-ribosylation. Interacts with Rpt5.

Its function is as follows. Acts as a chaperone during the assembly of the 26S proteasome, specifically of the base subcomplex of the PA700/19S regulatory complex (RC). The chain is 26S proteasome non-ATPase regulatory subunit 9 from Drosophila melanogaster (Fruit fly).